A 420-amino-acid chain; its full sequence is UDP-N-acetylglucosamine 1-carboxyvinyltransferase (420 aa).

22–23 (KN) provides a ligand contact to phosphoenolpyruvate. UDP-N-acetyl-alpha-D-glucosamine is bound at residue Arg91. The active-site Proton donor is Cys115. Residue Cys115 is modified to 2-(S-cysteinyl)pyruvic acid O-phosphothioketal. UDP-N-acetyl-alpha-D-glucosamine is bound by residues 120–124 (RPVDL), 160–163 (KVSV), Asp305, and Ile327.

It belongs to the EPSP synthase family. MurA subfamily.

The protein localises to the cytoplasm. It catalyses the reaction phosphoenolpyruvate + UDP-N-acetyl-alpha-D-glucosamine = UDP-N-acetyl-3-O-(1-carboxyvinyl)-alpha-D-glucosamine + phosphate. It functions in the pathway cell wall biogenesis; peptidoglycan biosynthesis. Its function is as follows. Cell wall formation. Adds enolpyruvyl to UDP-N-acetylglucosamine. The protein is UDP-N-acetylglucosamine 1-carboxyvinyltransferase of Proteus mirabilis (strain HI4320).